Consider the following 179-residue polypeptide: MIKSLLEGTWSQLRTLGMVFMHAFRKRETLQYPEEPVYLSPRYRGRIVLTRDPDGEERCVACNLCAVACPVACISLQKGERDDGRWYPEFFRINFSRCIFCGLCEEACPTSAIQLTPDFEMSEYRRQELVYEKDDLLISGPGKDHNYNFYRVAGLSIAGKGKGEAQNEAEPIDVKSLMP.

4Fe-4S ferredoxin-type domains are found at residues 49–79 and 89–118; these read LTRD…LQKG and EFFR…LTPD. [4Fe-4S] cluster-binding residues include Cys59, Cys62, Cys65, Cys69, Cys98, Cys101, Cys104, and Cys108.

It belongs to the complex I 23 kDa subunit family. In terms of assembly, NDH-1 is composed of 14 different subunits. Subunits NuoA, H, J, K, L, M, N constitute the membrane sector of the complex. Requires [4Fe-4S] cluster as cofactor.

It is found in the cell inner membrane. The catalysed reaction is a quinone + NADH + 5 H(+)(in) = a quinol + NAD(+) + 4 H(+)(out). Functionally, NDH-1 shuttles electrons from NADH, via FMN and iron-sulfur (Fe-S) centers, to quinones in the respiratory chain. The immediate electron acceptor for the enzyme in this species is believed to be ubiquinone. Couples the redox reaction to proton translocation (for every two electrons transferred, four hydrogen ions are translocated across the cytoplasmic membrane), and thus conserves the redox energy in a proton gradient. This is NADH-quinone oxidoreductase subunit I from Chromohalobacter salexigens (strain ATCC BAA-138 / DSM 3043 / CIP 106854 / NCIMB 13768 / 1H11).